The chain runs to 744 residues: Leucine-rich repeat extensin-like protein 1 (744 aa).

The N-terminal stretch at 1 to 26 (MLFPPLRSLFLFTLLLSSVCFLQIKA) is a signal peptide. N-linked (GlcNAc...) asparagine glycosylation is found at asparagine 71 and asparagine 77. 9 LRR repeats span residues 122 to 145 (LSDLALFHINSNRFCGEVPLTFNR), 147 to 170 (KLLYELDLSNNRFVGKFPKVVLSL), 171 to 194 (PSLKFLDLRYNEFEGKIPSKLFDR), 196 to 217 (LDAIFLNHNRFRFGIPKNMGNS), 219 to 240 (VSALVLADNNLGGCIPGSIGQM), 241 to 265 (GKTLNELILSNDNLTGCLPPQIGNL), 266 to 289 (KKVTVFDITSNRLQGPLPSSVGNM), 290 to 313 (KSLEELHVANNAFTGVIPPSICQL), and 315 to 336 (NLENFTYSSNYFSGRPPICAAS). Asparagine 253 is a glycosylation site (N-linked (GlcNAc...) asparagine). N-linked (GlcNAc...) asparagine glycans are attached at residues asparagine 318 and asparagine 344. Residues 381-404 (FSPPPPTFKMSPEVRTLPPPIYVY) form an LRR 10 repeat. The segment at 382–744 (SPPPPTFKMS…ASPPPPPSYY (363 aa)) is contains the Ser-Pro(4) repeats. 4 disordered regions span residues 408 to 445 (PPPPSSKMSPTVRAYSPPPPPSSKMSPSVRAYSPPPPP), 518 to 537 (VYSSPPPPPPSPPPPCPESS), 555 to 576 (PSPVYYPPVTQSPPPPSPVYYP), and 658 to 744 (PPPS…PSYY). Low complexity predominate over residues 430–439 (SKMSPSVRAY). Residues 704-729 (YEPPPEYSYSSSPPPPSPTSYFPPMP) are compositionally biased toward pro residues.

Hydroxylated on proline residues in the S-P-P-P-P repeat. Post-translationally, O-glycosylated on hydroxyprolines. Expressed in root hair cells (at protein level).

It localises to the secreted. It is found in the cell wall. In terms of biological role, modulates cell morphogenesis by regulating cell wall formation and assembly, and/or growth polarization. Together with LRX2, component of the extracellular mechanism regulating root hair morphogenesis and elongation. The sequence is that of Leucine-rich repeat extensin-like protein 1 (LRX1) from Arabidopsis thaliana (Mouse-ear cress).